The sequence spans 162 residues: Austinoid biosynthesis clusters protein J (162 aa).

Belongs to the trt14 isomerase family. In terms of assembly, homodimer.

The protein operates within secondary metabolite biosynthesis; terpenoid biosynthesis. Its function is as follows. Part of the gene cluster B that mediates the biosynthesis of austinol and dehydroaustinol, two fungal meroterpenoids. The first step of the pathway is the synthesis of 3,5-dimethylorsellinic acid by the polyketide synthase ausA. 3,5-dimethylorsellinic acid is then prenylated by the polyprenyl transferase ausN. Further epoxidation by the FAD-dependent monooxygenase ausM and cyclization by the probable terpene cyclase ausL lead to the formation of protoaustinoid A. Protoaustinoid A is then oxidized to spiro-lactone preaustinoid A3 by the combined action of the FAD-binding monooxygenases ausB and ausC, and the dioxygenase ausE. Acid-catalyzed keto-rearrangement and ring contraction of the tetraketide portion of preaustinoid A3 by ausJ lead to the formation of preaustinoid A4. The aldo-keto reductase ausK, with the help of ausH, is involved in the next step by transforming preaustinoid A4 into isoaustinone which is in turn hydroxylated by the P450 monooxygenase ausI to form austinolide. Finally, the cytochrome P450 monooxygenase ausG modifies austinolide to austinol. Austinol can be further modified to dehydroaustinol which forms a diffusible complex with diorcinol that initiates conidiation. Due to genetic rearrangements of the clusters and the subsequent loss of some enzymes, the end products of the Emericella nidulans austinoid biosynthesis clusters are austinol and dehydroaustinol, even if additional enzymes, such as the O-acetyltransferase ausQ and the cytochrome P450 monooxygenase ausR are still functional. The sequence is that of Austinoid biosynthesis clusters protein J from Emericella nidulans (strain FGSC A4 / ATCC 38163 / CBS 112.46 / NRRL 194 / M139) (Aspergillus nidulans).